Here is a 340-residue protein sequence, read N- to C-terminus: Serine/threonine-protein kinase PDIK1L (340 aa).

One can recognise a Protein kinase domain in the interval 8-333 (YDLIREVGRG…LELRLVQIAF (326 aa)). Residues 14–22 (VGRGSYGVV) and K37 contribute to the ATP site. The active-site Proton acceptor is the D164.

Belongs to the protein kinase superfamily. Ser/Thr protein kinase family.

It localises to the nucleus. It carries out the reaction L-seryl-[protein] + ATP = O-phospho-L-seryl-[protein] + ADP + H(+). The enzyme catalyses L-threonyl-[protein] + ATP = O-phospho-L-threonyl-[protein] + ADP + H(+). In Pongo abelii (Sumatran orangutan), this protein is Serine/threonine-protein kinase PDIK1L (PDIK1L).